The primary structure comprises 226 residues: 2-C-methyl-D-erythritol 4-phosphate cytidylyltransferase (226 aa).

The protein belongs to the IspD/TarI cytidylyltransferase family. IspD subfamily.

The enzyme catalyses 2-C-methyl-D-erythritol 4-phosphate + CTP + H(+) = 4-CDP-2-C-methyl-D-erythritol + diphosphate. The protein operates within isoprenoid biosynthesis; isopentenyl diphosphate biosynthesis via DXP pathway; isopentenyl diphosphate from 1-deoxy-D-xylulose 5-phosphate: step 2/6. Functionally, catalyzes the formation of 4-diphosphocytidyl-2-C-methyl-D-erythritol from CTP and 2-C-methyl-D-erythritol 4-phosphate (MEP). The sequence is that of 2-C-methyl-D-erythritol 4-phosphate cytidylyltransferase from Trichodesmium erythraeum (strain IMS101).